A 258-amino-acid polypeptide reads, in one-letter code: Regulatory protein RecX (258 aa).

The protein belongs to the RecX family.

It localises to the cytoplasm. Functionally, modulates RecA activity. The protein is Regulatory protein RecX of Streptococcus pneumoniae (strain JJA).